The following is a 232-amino-acid chain: Orotidine 5'-phosphate decarboxylase (232 aa).

Substrate contacts are provided by residues Asp-13, Lys-35, 62 to 71, Thr-121, Arg-182, Gln-191, Gly-211, and Arg-212; that span reads DLKFHDIPNT. The Proton donor role is filled by Lys-64.

The protein belongs to the OMP decarboxylase family. Type 1 subfamily. In terms of assembly, homodimer.

The enzyme catalyses orotidine 5'-phosphate + H(+) = UMP + CO2. The protein operates within pyrimidine metabolism; UMP biosynthesis via de novo pathway; UMP from orotate: step 2/2. Its function is as follows. Catalyzes the decarboxylation of orotidine 5'-monophosphate (OMP) to uridine 5'-monophosphate (UMP). In Acinetobacter baumannii (strain ACICU), this protein is Orotidine 5'-phosphate decarboxylase.